Reading from the N-terminus, the 179-residue chain is MSSRVLTPDVVGIDALVHDHQTVLAKAEGGVVAVFANNAPAFYAITPARLAELLALEEKLARPGSDVALDDQLYQEPQTAPVAVPMGKFAMYPDWQPDADFIRLAALWGVALRESVTAEELASFIAYWQAEGKVFHHVQWQQKLARSLQIGRASNGGLPKRDVNTVSEPDSQIPPGFRG.

The tract at residues 156-179 (GGLPKRDVNTVSEPDSQIPPGFRG) is disordered.

This sequence belongs to the DnaT family. Homooligomerizes. Interacts with PriB. Component of the replication restart primosome. Primosome assembly occurs via a 'hand-off' mechanism. PriA binds to replication forks, subsequently PriB then DnaT bind; DnaT then displaces ssDNA to generate the helicase loading substrate.

Involved in the restart of stalled replication forks, which reloads the replicative helicase on sites other than the origin of replication. Can function in multiple replication restart pathways. Displaces ssDNA from a PriB-ssDNA complex. Probably forms a spiral filament on ssDNA. The polypeptide is Replication restart protein DnaT (Escherichia coli O1:K1 / APEC).